Consider the following 329-residue polypeptide: Pantothenate kinase (329 aa).

The segment at 1 to 21 (MISPVPSIPRSAHRQRPEATP) is disordered. Residue 107–114 (GSVAVGKS) participates in ATP binding.

The protein belongs to the prokaryotic pantothenate kinase family.

The protein localises to the cytoplasm. The catalysed reaction is (R)-pantothenate + ATP = (R)-4'-phosphopantothenate + ADP + H(+). It participates in cofactor biosynthesis; coenzyme A biosynthesis; CoA from (R)-pantothenate: step 1/5. This Streptomyces coelicolor (strain ATCC BAA-471 / A3(2) / M145) protein is Pantothenate kinase (coaA).